The chain runs to 91 residues: Small ribosomal subunit protein uS19 (91 aa).

It belongs to the universal ribosomal protein uS19 family.

Its function is as follows. Protein S19 forms a complex with S13 that binds strongly to the 16S ribosomal RNA. The chain is Small ribosomal subunit protein uS19 from Shouchella clausii (strain KSM-K16) (Alkalihalobacillus clausii).